Reading from the N-terminus, the 389-residue chain is Lipid-A-disaccharide synthase (389 aa).

It belongs to the LpxB family.

It catalyses the reaction a lipid X + a UDP-2-N,3-O-bis[(3R)-3-hydroxyacyl]-alpha-D-glucosamine = a lipid A disaccharide + UDP + H(+). The protein operates within bacterial outer membrane biogenesis; LPS lipid A biosynthesis. Condensation of UDP-2,3-diacylglucosamine and 2,3-diacylglucosamine-1-phosphate to form lipid A disaccharide, a precursor of lipid A, a phosphorylated glycolipid that anchors the lipopolysaccharide to the outer membrane of the cell. The protein is Lipid-A-disaccharide synthase of Burkholderia ambifaria (strain MC40-6).